Reading from the N-terminus, the 64-residue chain is Conotoxin Cal12.4 (64 aa).

The signal sequence occupies residues 1-21; it reads MKLTCMLVVLLLVLPFGDLIA.

Belongs to the conotoxin O1 superfamily. In terms of processing, contains 4 disulfide bonds. Expressed by the venom duct.

The protein resides in the secreted. Its function is as follows. Probable neurotoxin. This Californiconus californicus (California cone) protein is Conotoxin Cal12.4.